The sequence spans 328 residues: Gonadotropin-releasing hormone receptor (328 aa).

Residues 1 to 38 (MANSASPEQNQNHCSAINNSIPLMQGNLPTLTLSGKIR) lie on the Extracellular side of the membrane. N18 carries N-linked (GlcNAc...) asparagine glycosylation. Residues 39–58 (VTVTFFLFLLSATFNASFLL) traverse the membrane as a helical segment. At 59–77 (KLQKWTQKKEKGKKLSRMK) the chain is on the cytoplasmic side. The helical transmembrane segment at 78 to 97 (LLLKHLTLANLLETLIVMPL) threads the bilayer. The Extracellular portion of the chain corresponds to 98–115 (DGMWNITVQWYAGELLCK). The N-linked (GlcNAc...) asparagine glycan is linked to N102. The cysteines at positions 114 and 196 are disulfide-linked. Residues 116-137 (VLSYLKLFSMYAPAFMMVVISL) traverse the membrane as a helical segment. The Cytoplasmic portion of the chain corresponds to 138–164 (DRSLAITRPLALKSNSKVGQSMVGLAW). A helical transmembrane segment spans residues 165–184 (ILSSVFAGPQLYIFRMIHLA). Over 185-212 (DSSGQTKVFSQCVTHCSFSQWWHQAFYN) the chain is Extracellular. A helical transmembrane segment spans residues 213 to 232 (FFTFSCLFIIPLFIMLICNA). At 233–281 (KIIFTLTRVLHQDPHELQLNQSKNNIPRARLKTLKMTVAFATSFTVCWT) the chain is on the cytoplasmic side. Residues 282–300 (PYYVLGIWYWFDPEMLNRL) traverse the membrane as a helical segment. Residues 301 to 306 (SDPVNH) are Extracellular-facing. The helical transmembrane segment at 307–326 (FFFLFAFLNPCFDPLIYGYF) threads the bilayer. The Cytoplasmic segment spans residues 327–328 (SL).

It belongs to the G-protein coupled receptor 1 family. In terms of tissue distribution, pituitary, ovary, testis, breast and prostate but not in liver and spleen.

The protein localises to the cell membrane. Its function is as follows. Receptor for gonadotropin releasing hormone (GnRH) that mediates the action of GnRH to stimulate the secretion of the gonadotropic hormones luteinizing hormone (LH) and follicle-stimulating hormone (FSH). This receptor mediates its action by association with G-proteins that activate a phosphatidylinositol-calcium second messenger system. Isoform 2 may act as an inhibitor of GnRH-R signaling. This is Gonadotropin-releasing hormone receptor (GNRHR) from Homo sapiens (Human).